Here is a 186-residue protein sequence, read N- to C-terminus: Tumor necrosis factor, alpha-induced protein 8-like protein 2 A (186 aa).

It belongs to the TNFAIP8 family. TNFAIP8L2 subfamily.

In terms of biological role, acts as a negative regulator of innate and adaptive immunity by maintaining immune homeostasis. Negative regulator of Toll-like receptor and T-cell receptor function. Prevents hyperresponsiveness of the immune system and maintains immune homeostasis. Inhibits jun/ap1 and NF-kappa-B activation. Promotes Fas-induced apoptosis. The polypeptide is Tumor necrosis factor, alpha-induced protein 8-like protein 2 A (tnfaip8l2a) (Danio rerio (Zebrafish)).